Reading from the N-terminus, the 827-residue chain is MDSKYNHYEIEKDKNQKWIDKKYFINHDLDKKPFSIILPPPNVTGQLHLGHALNGYLQDSVIRYKKLEGYDVLFLPAMDHAGIATQIKVEESLAKENLLKQDIGREKFLKFSYQWKDKYANIIKSQWNKLGLALDYSSERFTLDQDSKDTVNKVFIDLYNAGIIYQGVKGINWDPLQKTALSNVEVINKETPQKMYYIKYFLENSDEFVEIATVRTETLYSDRAIGINPNDLRAKNYVNKFVIHPLTKKRLPIITDDYIDQSFASGFMKISAHSLADIDILNKNNLEIVESIDESGFLTNICDEFEGMERFEAREKIAQKLQKENLISRVENYSSNIGYSDRTKVPIEILVKKQWFVKMDLFSKMVLDSLESKNKVNFYPSRFKKNLEGWMNKTYDWTISRQLWWGHQIPAWYKDEQTKVQLNSPGPDWTQDPDVLDTWFSSAIAPFSFFGWPNTYKKLKRYYPTSLLVTGHDIIFFWVSRMYFSGLYFMKDKPFNDVLLHGLIRDEQRRKMTKSLGNGIDPMVLIDQYGSDSLRWFLITNTTPGLDITYNEEKIKSSWNFMNKLWNIARFINLQENTKKVSMSKYDYWISDKFNKVESYVKKFMKKYEFTLIGKEIYKFIINDFSSWYLEFSKITKNIDFQKVIFKRLLLLLHPFIPFLTDHLFKIIYDQELLEHTFENKKLKTQKNNVDQLILVIRAIREFREKYQISKKEKIKYWIQDCQFLQEDIDAINFLTFSELSQNSENMTIVENIKIFMILPKNIEENLSKEKAQKIEFLKFEIKRAQSLLLNEKFISKAPTLKVEEEKAKLEKYQLQLKELLDEKIIE.

Residues proline 41–histidine 51 carry the 'HIGH' region motif. A 'KMSKS' region motif is present at residues lysine 511–serine 515. Lysine 514 is a binding site for ATP. The stretch at glutamate 765–glutamate 827 forms a coiled coil.

It belongs to the class-I aminoacyl-tRNA synthetase family. ValS type 1 subfamily. As to quaternary structure, monomer.

The protein resides in the cytoplasm. The enzyme catalyses tRNA(Val) + L-valine + ATP = L-valyl-tRNA(Val) + AMP + diphosphate. Its function is as follows. Catalyzes the attachment of valine to tRNA(Val). As ValRS can inadvertently accommodate and process structurally similar amino acids such as threonine, to avoid such errors, it has a 'posttransfer' editing activity that hydrolyzes mischarged Thr-tRNA(Val) in a tRNA-dependent manner. This is Valine--tRNA ligase from Mycoplasmopsis pulmonis (strain UAB CTIP) (Mycoplasma pulmonis).